A 112-amino-acid polypeptide reads, in one-letter code: T cell receptor alpha variable 2 (112 aa).

The signal sequence occupies residues 1 to 25; that stretch reads MALQSTLGAVWLGLLLNSLWKVAES. The Ig-like domain maps to 26–112; it reads KDQVFQPSTV…DAAVYYCAVE (87 aa). A disulfide bond links Cys47 and Cys109. N-linked (GlcNAc...) asparagine glycans are attached at residues Asn48 and Asn84.

In terms of assembly, alpha-beta TR is a heterodimer composed of an alpha and beta chain; disulfide-linked. The alpha-beta TR is associated with the transmembrane signaling CD3 coreceptor proteins to form the TR-CD3 (TcR or TCR). The assembly of alpha-beta TR heterodimers with CD3 occurs in the endoplasmic reticulum where a single alpha-beta TR heterodimer associates with one CD3D-CD3E heterodimer, one CD3G-CD3E heterodimer and one CD247 homodimer forming a stable octameric structure. CD3D-CD3E and CD3G-CD3E heterodimers preferentially associate with TR alpha and TR beta chains, respectively. The association of the CD247 homodimer is the last step of TcR assembly in the endoplasmic reticulum and is required for transport to the cell surface.

It is found in the cell membrane. V region of the variable domain of T cell receptor (TR) alpha chain that participates in the antigen recognition. Alpha-beta T cell receptors are antigen specific receptors which are essential to the immune response and are present on the cell surface of T lymphocytes. Recognize peptide-major histocompatibility (MH) (pMH) complexes that are displayed by antigen presenting cells (APC), a prerequisite for efficient T cell adaptive immunity against pathogens. Binding of alpha-beta TR to pMH complex initiates TR-CD3 clustering on the cell surface and intracellular activation of LCK that phosphorylates the ITAM motifs of CD3G, CD3D, CD3E and CD247 enabling the recruitment of ZAP70. In turn ZAP70 phosphorylates LAT, which recruits numerous signaling molecules to form the LAT signalosome. The LAT signalosome propagates signal branching to three major signaling pathways, the calcium, the mitogen-activated protein kinase (MAPK) kinase and the nuclear factor NF-kappa-B (NF-kB) pathways, leading to the mobilization of transcription factors that are critical for gene expression and essential for T cell growth and differentiation. The T cell repertoire is generated in the thymus, by V-(D)-J rearrangement. This repertoire is then shaped by intrathymic selection events to generate a peripheral T cell pool of self-MH restricted, non-autoaggressive T cells. Post-thymic interaction of alpha-beta TR with the pMH complexes shapes TR structural and functional avidity. This is T cell receptor alpha variable 2 from Homo sapiens (Human).